A 338-amino-acid chain; its full sequence is Ketol-acid reductoisomerase (NADP(+)) (338 aa).

A KARI N-terminal Rossmann domain is found at 1–181 (MKVFYDKDAD…GGGRAGIIET (181 aa)). Residues 24-27 (YGSQ), Arg47, and Ser52 each bind NADP(+). His107 is an active-site residue. Gly133 lines the NADP(+) pocket. The 146-residue stretch at 182–327 (NFREETETDL…SKLRAMMPWI (146 aa)) folds into the KARI C-terminal knotted domain. Asp190, Glu194, Glu226, and Glu230 together coordinate Mg(2+). Ser251 serves as a coordination point for substrate.

It belongs to the ketol-acid reductoisomerase family. Mg(2+) serves as cofactor.

The enzyme catalyses (2R)-2,3-dihydroxy-3-methylbutanoate + NADP(+) = (2S)-2-acetolactate + NADPH + H(+). The catalysed reaction is (2R,3R)-2,3-dihydroxy-3-methylpentanoate + NADP(+) = (S)-2-ethyl-2-hydroxy-3-oxobutanoate + NADPH + H(+). Its pathway is amino-acid biosynthesis; L-isoleucine biosynthesis; L-isoleucine from 2-oxobutanoate: step 2/4. It participates in amino-acid biosynthesis; L-valine biosynthesis; L-valine from pyruvate: step 2/4. Involved in the biosynthesis of branched-chain amino acids (BCAA). Catalyzes an alkyl-migration followed by a ketol-acid reduction of (S)-2-acetolactate (S2AL) to yield (R)-2,3-dihydroxy-isovalerate. In the isomerase reaction, S2AL is rearranged via a Mg-dependent methyl migration to produce 3-hydroxy-3-methyl-2-ketobutyrate (HMKB). In the reductase reaction, this 2-ketoacid undergoes a metal-dependent reduction by NADPH to yield (R)-2,3-dihydroxy-isovalerate. The chain is Ketol-acid reductoisomerase (NADP(+)) from Burkholderia thailandensis (strain ATCC 700388 / DSM 13276 / CCUG 48851 / CIP 106301 / E264).